A 234-amino-acid chain; its full sequence is MKELIEFLEKTGLKTEADSLRNGGTELNPQSNIGTLGAKKLAAALKDNKSLKYLNLIGSYIGEEGARALAEALKDNESLKELYLTPADISTVTLNRIKEYIQRNTDLYYKEQQQYNKQLISSIKANEIKQAESIIPFIDPKYSNSVDENNNTALHYAVDKNLEKLSISLINKMSIETISIGNMYNNTALHYATDNGLEVISWFLINNMTQKALDMVNTDGNTALDYAIHNRHLL.

ANK repeat units follow at residues 149–180 (NNNT…TISI) and 184–213 (YNNT…QKAL).

The sequence is that of Putative ankyrin repeat protein RF_0063 from Rickettsia felis (strain ATCC VR-1525 / URRWXCal2) (Rickettsia azadi).